The chain runs to 165 residues: Iron sulfur cluster assembly protein 1, mitochondrial (165 aa).

Residues 1–27 (MLPVITRFARPALMAIRPVNAMGVLRA) constitute a mitochondrion transit peptide. Positions 132–136 (LPPVK) are SSQ1 binding region.

It belongs to the NifU family. As to quaternary structure, homodimer, but can exist as monomers or trimers. Oligomerization may be regulated by Zn(2+) availability. Component of the core Fe-S cluster (ISC) assembly machinery. Interacts with YFH1/frataxin with a 1 to 1 stoichiometry; the interaction is direct. Interacts with the mitochondrial co-chaperones JAC1 and SSQ1. Interacts with NFS1. Interacts with YAH1/ferredoxin; interacts with the reduced form. The cofactor is [2Fe-2S] cluster. Zn(2+) serves as cofactor.

It is found in the mitochondrion matrix. It functions in the pathway cofactor biosynthesis; iron-sulfur cluster biosynthesis. In terms of biological role, scaffold protein for the de novo synthesis of iron-sulfur (Fe-S) clusters within mitochondria, which is required for maturation of both mitochondrial and cytoplasmic [2Fe-2S] and [4Fe-4S] proteins. First, a [2Fe-2S] cluster is transiently assembled on the scaffold proteins ISU1 and ISU2. In a second step, the cluster is released from ISU1/ISU2, transferred to glutaredoxin GRX5, followed by the formation of mitochondrial [2Fe-2S] proteins, the synthesis of [4Fe-4S] clusters and their target-specific insertion into the recipient apoproteins. Cluster assembly on ISU1/ISU2 depends on the function of the cysteine desulfurase complex NFS1-ISD11, which serves as the sulfur donor for cluster synthesis, the iron-binding protein frataxin (YFH1) as the putative iron donor, and the electron transfer chain comprised of ferredoxin reductase ARH1 and ferredoxin YAH1, which receive their electrons from NADH. Fe-S cluster release from ISU1/ISU2 is achieved by interaction with the Hsp70 chaperone SSQ1, assisted by the DnaJ-like co-chaperone JAC1 and the nucleotide exchange factor MGE1. ISU1 is the major isoform in yeast, while ISU2 is not detectable in cells grown to stationary phase. Also involved in production of a sulfur precursor required for thiolation of cytoplasmic tRNAs. This Saccharomyces cerevisiae (strain ATCC 204508 / S288c) (Baker's yeast) protein is Iron sulfur cluster assembly protein 1, mitochondrial.